The following is a 345-amino-acid chain: AP2-like ethylene-responsive transcription factor At1g16060 (345 aa).

Residues 15–62 (TRQSKKTSVENETGDDQSATSVVLKAKRKRRSQPRDAPPQRSSVHRGV) are disordered. DNA-binding regions (AP2/ERF) lie at residues 58–124 (VHRG…LNFP) and 160–218 (KYRG…TNFD). A disordered region spans residues 243–302 (HSDLSPFIKPNHESDLSQSQSSSEDNDDRKTKLLKSSPLVAEEVIGPSTPPEIAPPRRSF).

This sequence belongs to the AP2/ERF transcription factor family. AP2 subfamily.

It localises to the nucleus. Its function is as follows. Probably acts as a transcriptional activator. Binds to the GCC-box pathogenesis-related promoter element. May be involved in the regulation of gene expression by stress factors and by components of stress signal transduction pathways. The protein is AP2-like ethylene-responsive transcription factor At1g16060 of Arabidopsis thaliana (Mouse-ear cress).